The sequence spans 105 residues: Met repressor (105 aa).

Belongs to the MetJ family. In terms of assembly, homodimer.

It localises to the cytoplasm. Its function is as follows. This regulatory protein, when combined with SAM (S-adenosylmethionine) represses the expression of the methionine regulon and of enzymes involved in SAM synthesis. The protein is Met repressor of Haemophilus influenzae (strain 86-028NP).